The primary structure comprises 340 residues: Fructose-1,6-bisphosphatase class 1 (340 aa).

Mg(2+)-binding residues include glutamate 107, aspartate 126, leucine 128, and aspartate 129. Asparagine 215 provides a ligand contact to substrate. Residue glutamate 287 participates in Mg(2+) binding.

This sequence belongs to the FBPase class 1 family. As to quaternary structure, homotetramer. Requires Mg(2+) as cofactor.

The protein resides in the cytoplasm. The enzyme catalyses beta-D-fructose 1,6-bisphosphate + H2O = beta-D-fructose 6-phosphate + phosphate. Its pathway is carbohydrate biosynthesis; gluconeogenesis. This Brucella anthropi (strain ATCC 49188 / DSM 6882 / CCUG 24695 / JCM 21032 / LMG 3331 / NBRC 15819 / NCTC 12168 / Alc 37) (Ochrobactrum anthropi) protein is Fructose-1,6-bisphosphatase class 1.